Reading from the N-terminus, the 701-residue chain is DNA ligase (701 aa).

The interval 1–21 (MSAKSTPDAGPQEQATEAEAE) is disordered. NAD(+) contacts are provided by residues 50–54 (DADFD), 100–101 (SL), and Glu-130. Lys-132 serves as the catalytic N6-AMP-lysine intermediate. NAD(+) contacts are provided by Arg-153, Glu-193, Lys-309, and Lys-333. Zn(2+) contacts are provided by Cys-427, Cys-430, Cys-446, and Cys-452. The BRCT domain maps to 616–701 (SIARTLEGLS…LENGPQAPEG (86 aa)).

Belongs to the NAD-dependent DNA ligase family. LigA subfamily. Requires Mg(2+) as cofactor. It depends on Mn(2+) as a cofactor.

The catalysed reaction is NAD(+) + (deoxyribonucleotide)n-3'-hydroxyl + 5'-phospho-(deoxyribonucleotide)m = (deoxyribonucleotide)n+m + AMP + beta-nicotinamide D-nucleotide.. Its function is as follows. DNA ligase that catalyzes the formation of phosphodiester linkages between 5'-phosphoryl and 3'-hydroxyl groups in double-stranded DNA using NAD as a coenzyme and as the energy source for the reaction. It is essential for DNA replication and repair of damaged DNA. This is DNA ligase from Mycobacterium sp. (strain KMS).